We begin with the raw amino-acid sequence, 385 residues long: GTPase Obg (385 aa).

The region spanning 1-159 is the Obg domain; the sequence is MKFVDEATIL…REIQLELMLL (159 aa). The 174-residue stretch at 160-333 folds into the OBG-type G domain; that stretch reads ADVGMLGLPN…LCWDVMAFIN (174 aa). GTP contacts are provided by residues 166 to 173, 191 to 195, 213 to 216, 283 to 286, and 314 to 316; these read GLPNAGKS, FTTLV, DIPG, NKAD, and SAA. Mg(2+) is bound by residues serine 173 and threonine 193. Acidic residues predominate over residues 362–379; sequence QQEEAEETLDDDWDEDGV. The disordered stretch occupies residues 362–385; the sequence is QQEEAEETLDDDWDEDGVETIYQR.

Belongs to the TRAFAC class OBG-HflX-like GTPase superfamily. OBG GTPase family. As to quaternary structure, monomer. Mg(2+) is required as a cofactor.

It localises to the cytoplasm. An essential GTPase which binds GTP, GDP and possibly (p)ppGpp with moderate affinity, with high nucleotide exchange rates and a fairly low GTP hydrolysis rate. Plays a role in control of the cell cycle, stress response, ribosome biogenesis and in those bacteria that undergo differentiation, in morphogenesis control. The protein is GTPase Obg of Sodalis glossinidius (strain morsitans).